Here is a 256-residue protein sequence, read N- to C-terminus: Probable succinate transporter subunit YjjP (256 aa).

Topologically, residues M1–R113 are cytoplasmic. A helical membrane pass occupies residues Y114–N135. Residues G136–G140 are Periplasmic-facing. The chain crosses the membrane as a helical span at residues A141 to L158. Topologically, residues A159–N168 are cytoplasmic. The chain crosses the membrane as a helical span at residues F169–F189. Over S190 to T194 the chain is Periplasmic. A helical transmembrane segment spans residues I195–A215. Residues D216–R228 are Cytoplasmic-facing. A helical transmembrane segment spans residues W229–I249. Residues W250–V256 are Periplasmic-facing.

This sequence belongs to the ThrE exporter (TC 2.A.79) family. As to quaternary structure, the transporter is composed of YjjB and YjjP.

It is found in the cell inner membrane. Functionally, involved in succinate export with YjjB. Both proteins are required for export. Contributes to succinate production under both aerobic and anaerobic conditions. The polypeptide is Probable succinate transporter subunit YjjP (yjjP) (Escherichia coli (strain K12)).